We begin with the raw amino-acid sequence, 423 residues long: ATP-citrate synthase alpha chain protein 2 (423 aa).

Citrate is bound by residues N343, T345, and R376.

The protein belongs to the succinate/malate CoA ligase beta subunit family. Heterooctamer of 4 alpha and 4 beta chains.

Its subcellular location is the cytoplasm. The protein localises to the cytosol. It carries out the reaction oxaloacetate + acetyl-CoA + ADP + phosphate = citrate + ATP + CoA. Its function is as follows. ATP citrate-lyase is the primary enzyme responsible for the synthesis of cytosolic acetyl-CoA, used for the elongation of fatty acids and biosynthesis of isoprenoids, flavonoids and malonated derivatives. May supply substrate to the cytosolic acetyl-CoA carboxylase, which generates the malonyl-CoA used for the synthesis of a multitude of compounds, including very long chain fatty acids and flavonoids. In contrast to all known animal ACL enzymes having a homomeric structure, plant ACLs are composed of alpha and beta chains. This is ATP-citrate synthase alpha chain protein 2 (ACLA-2) from Oryza sativa subsp. japonica (Rice).